A 95-amino-acid polypeptide reads, in one-letter code: uncharacterized protein (95 aa).

A signal peptide spans 1-21 (MKKITLFFTALLCLFSTSVLA).

This is an uncharacterized protein from Haemophilus influenzae (strain ATCC 51907 / DSM 11121 / KW20 / Rd).